The sequence spans 417 residues: UDP-N-acetylmuramoylalanine--D-glutamate ligase (417 aa).

ATP is bound at residue 101-107; sequence GTAGKTS.

Belongs to the MurCDEF family.

It is found in the cytoplasm. It catalyses the reaction UDP-N-acetyl-alpha-D-muramoyl-L-alanine + D-glutamate + ATP = UDP-N-acetyl-alpha-D-muramoyl-L-alanyl-D-glutamate + ADP + phosphate + H(+). It participates in cell wall biogenesis; peptidoglycan biosynthesis. Functionally, cell wall formation. Catalyzes the addition of glutamate to the nucleotide precursor UDP-N-acetylmuramoyl-L-alanine (UMA). The polypeptide is UDP-N-acetylmuramoylalanine--D-glutamate ligase (Thermus thermophilus (strain ATCC BAA-163 / DSM 7039 / HB27)).